The sequence spans 88 residues: Apolipoprotein C-I (88 aa).

Residues 1 to 26 form the signal peptide; the sequence is MRLFLSLPVLVVVLAMVWEGPAPTQA.

Belongs to the apolipoprotein C1 family.

It is found in the secreted. Inhibitor of lipoprotein binding to the low density lipoprotein (LDL) receptor, LDL receptor-related protein, and very low density lipoprotein (VLDL) receptor. Associates with high density lipoproteins (HDL) and the triacylglycerol-rich lipoproteins in the plasma and makes up about 10% of the protein of the VLDL and 2% of that of HDL. Appears to interfere directly with fatty acid uptake and is also the major plasma inhibitor of cholesteryl ester transfer protein (CETP). Binds free fatty acids and reduces their intracellular esterification. Modulates the interaction of APOE with beta-migrating VLDL and inhibits binding of beta-VLDL to the LDL receptor-related protein. This is Apolipoprotein C-I (APOC1) from Neomonachus schauinslandi (Hawaiian monk seal).